The sequence spans 238 residues: Ribonuclease PH (238 aa).

Phosphate contacts are provided by residues R86 and 124–126 (GTR).

This sequence belongs to the RNase PH family. As to quaternary structure, homohexameric ring arranged as a trimer of dimers.

The catalysed reaction is tRNA(n+1) + phosphate = tRNA(n) + a ribonucleoside 5'-diphosphate. Phosphorolytic 3'-5' exoribonuclease that plays an important role in tRNA 3'-end maturation. Removes nucleotide residues following the 3'-CCA terminus of tRNAs; can also add nucleotides to the ends of RNA molecules by using nucleoside diphosphates as substrates, but this may not be physiologically important. Probably plays a role in initiation of 16S rRNA degradation (leading to ribosome degradation) during starvation. The sequence is that of Ribonuclease PH from Mannheimia haemolytica (Pasteurella haemolytica).